Here is a 103-residue protein sequence, read N- to C-terminus: Large ribosomal subunit protein bL21 (103 aa).

The protein belongs to the bacterial ribosomal protein bL21 family. In terms of assembly, part of the 50S ribosomal subunit. Contacts protein L20.

Functionally, this protein binds to 23S rRNA in the presence of protein L20. In Kocuria rhizophila (strain ATCC 9341 / DSM 348 / NBRC 103217 / DC2201), this protein is Large ribosomal subunit protein bL21.